The primary structure comprises 602 residues: MCGIVGVVGNTNATDILIQGLEKLEYRGYDSAGIFVLDGADNHLVKAVGRIAELSAKTAGVEGTTGIGHTRWATHGKPTEDNAHPHRSETERFVLVHNGVIENYLEIKEEYLAGHHFKGQTDTEIAVHLIGKFAEEDGLSVLEAFKKALHIIRGSYAFALIDSENPDVIYVAKNKSPLLIGLGEGYNMVCSDAMAMIRETNQYMEIHDQELVIVKADSVEVQDYDGNSRERASYTAELDLSDIGKGTYPYYMLKEIDEQPTVMRKLIQAYTDDAGQVVIDPAIIKAVQDADRIYILAAGTSYHAGFASKKMLEELTDTPVELGISSEWGYGMPLLSKKPLFIFISQSGETADSRQVLVKANEMGIPSLTVTNVPGSTLSREANYTMLLHAGPEIAVASTKAYTAQIAALAFLAKAVGEANGNAKAQAFDLVHELSIVAQSIESTLSEKETIEAKVRELLETTRNAFYIGRGQDYYVAMEASLKLKEISYIQCEGFAAGELKHGTIALIEEGTPVLALLSDPVLANHTRGNIQEVAARGAKVLTIAEENVAKDTDDIVLTTVHPYLSPISMVVPTQLVAYFATLHRGLDVDKPRNLAKSVTVE.

The active-site Nucleophile; for GATase activity is C2. One can recognise a Glutamine amidotransferase type-2 domain in the interval 2–217 (CGIVGVVGNT…DQELVIVKAD (216 aa)). The segment at 67 to 87 (IGHTRWATHGKPTEDNAHPHR) is disordered. Positions 77–87 (KPTEDNAHPHR) are enriched in basic and acidic residues. 2 consecutive SIS domains span residues 283-422 (IIKA…ANGN) and 455-592 (VREL…VDKP). The For Fru-6P isomerization activity role is filled by K597.

In terms of assembly, homodimer.

Its subcellular location is the cytoplasm. It carries out the reaction D-fructose 6-phosphate + L-glutamine = D-glucosamine 6-phosphate + L-glutamate. In terms of biological role, catalyzes the first step in hexosamine metabolism, converting fructose-6P into glucosamine-6P using glutamine as a nitrogen source. In Streptococcus pneumoniae (strain ATCC BAA-255 / R6), this protein is Glutamine--fructose-6-phosphate aminotransferase [isomerizing].